We begin with the raw amino-acid sequence, 528 residues long: Bifunctional dihydrofolate reductase-thymidylate synthase (528 aa).

The disordered stretch occupies residues 1 to 20; that stretch reads MASELLANPTNGSGITRPDP. The DHFR domain maps to 23–200; it reads TYQVVVAATQ…IRYCFTTYVR (178 aa). Val27 contributes to the substrate binding site. Residues Ala29 and 35–41 each bind NADP(+); that span reads GIGKDGK. Asp49 lines the substrate pocket. Residues 73–75 and 94–97 contribute to the NADP(+) site; these read RKT and LTRS. Substrate is bound by residues Ile136, Tyr142, and Thr157. Residue 137–144 participates in NADP(+) binding; sequence GGGQIYRE. A thymidylate synthase region spans residues 202–528; the sequence is RNSVAELTSQ…HQKIEMKMAV (327 aa). Arg264 is a binding site for dUMP. Residue Cys409 is part of the active site. Residues His410, 428-432, Asn440, and 470-472 contribute to the dUMP site; these read QRSAD and HVY.

It in the N-terminal section; belongs to the dihydrofolate reductase family. This sequence in the C-terminal section; belongs to the thymidylate synthase family.

The catalysed reaction is (6S)-5,6,7,8-tetrahydrofolate + NADP(+) = 7,8-dihydrofolate + NADPH + H(+). It catalyses the reaction dUMP + (6R)-5,10-methylene-5,6,7,8-tetrahydrofolate = 7,8-dihydrofolate + dTMP. It participates in cofactor biosynthesis; tetrahydrofolate biosynthesis; 5,6,7,8-tetrahydrofolate from 7,8-dihydrofolate: step 1/1. Bifunctional enzyme. Involved in de novo dTMP biosynthesis. Key enzyme in folate metabolism. Can play two different roles depending on the source of dihydrofolate: de novo synthesis of tetrahydrofolate or recycling of the dihydrofolate released as one of the end products of the TS catalyzed reaction. Catalyzes an essential reaction for de novo glycine and purine synthesis, DNA precursor synthesis, and for the conversion of dUMP to dTMP. The polypeptide is Bifunctional dihydrofolate reductase-thymidylate synthase (Daucus carota (Wild carrot)).